A 152-amino-acid polypeptide reads, in one-letter code: Large ribosomal subunit protein uL13 (152 aa).

The protein belongs to the universal ribosomal protein uL13 family. As to quaternary structure, part of the 50S ribosomal subunit.

This protein is one of the early assembly proteins of the 50S ribosomal subunit, although it is not seen to bind rRNA by itself. It is important during the early stages of 50S assembly. The protein is Large ribosomal subunit protein uL13 of Borreliella afzelii (strain PKo) (Borrelia afzelii).